A 336-amino-acid polypeptide reads, in one-letter code: DNA-directed RNA polymerase subunit alpha (336 aa).

The interval 1–232 (MIQKNWQELI…DQLSVFVNFD (232 aa)) is alpha N-terminal domain (alpha-NTD). An alpha C-terminal domain (alpha-CTD) region spans residues 248 to 336 (FNPALLKKVD…DLAKRYEDQY (89 aa)).

It belongs to the RNA polymerase alpha chain family. Homodimer. The RNAP catalytic core consists of 2 alpha, 1 beta, 1 beta' and 1 omega subunit. When a sigma factor is associated with the core the holoenzyme is formed, which can initiate transcription.

The catalysed reaction is RNA(n) + a ribonucleoside 5'-triphosphate = RNA(n+1) + diphosphate. Its function is as follows. DNA-dependent RNA polymerase catalyzes the transcription of DNA into RNA using the four ribonucleoside triphosphates as substrates. This is DNA-directed RNA polymerase subunit alpha from Sinorhizobium fredii (strain NBRC 101917 / NGR234).